The chain runs to 238 residues: Cysteine-rich venom protein pseudechetoxin-like (238 aa).

An N-terminal signal peptide occupies residues 1–19 (MIAFIVLLSLAAVLQQSSG). A propeptide spanning residues 20–28 (TVDFASESS) is cleaved from the precursor. The SCP domain maps to 38–164 (VDKHNALRRS…STKYLYVCQY (127 aa)). 8 disulfide bridges follow: C75–C153, C92–C165, C148–C162, C184–C191, C187–C196, C200–C233, C209–C227, and C218–C231. In terms of domain architecture, ShKT spans 200-233 (CKYEDDFSNCKALAKNSKCQTEWIKSKCPAACFC).

Belongs to the CRISP family. As to expression, expressed by the venom gland.

Its subcellular location is the secreted. Blocks olfactory (CNGA2) and retinal (CNGA1) CNG channel currents. Does not affect neither depolarization- nor caffeine-induced contraction of smooth muscle. The protein is Cysteine-rich venom protein pseudechetoxin-like of Notechis scutatus scutatus (Mainland tiger snake).